A 103-amino-acid chain; its full sequence is Small ribosomal subunit protein bS20 (103 aa).

The segment covering 1–20 (MATAKPKKKNPRLASGRKRV) has biased composition (basic residues). Residues 1-31 (MATAKPKKKNPRLASGRKRVRQDTKLNAANT) are disordered.

This sequence belongs to the bacterial ribosomal protein bS20 family.

Functionally, binds directly to 16S ribosomal RNA. In Polaromonas sp. (strain JS666 / ATCC BAA-500), this protein is Small ribosomal subunit protein bS20.